Reading from the N-terminus, the 454-residue chain is Phosphoglucosamine mutase (454 aa).

The Phosphoserine intermediate role is filled by Ser101. The Mg(2+) site is built by Ser101, Asp243, Asp245, and Asp247. At Ser101 the chain carries Phosphoserine.

This sequence belongs to the phosphohexose mutase family. It depends on Mg(2+) as a cofactor. In terms of processing, activated by phosphorylation.

The catalysed reaction is alpha-D-glucosamine 1-phosphate = D-glucosamine 6-phosphate. In terms of biological role, catalyzes the conversion of glucosamine-6-phosphate to glucosamine-1-phosphate. The protein is Phosphoglucosamine mutase of Geobacter sp. (strain M21).